A 113-amino-acid chain; its full sequence is T cell receptor alpha variable 12-2 (113 aa).

An N-terminal signal peptide occupies residues 1–20 (MKSLRVLLVILWLQLSWVWS). The Ig-like domain maps to 23–113 (KEVEQNSGPL…DSATYLCAVN (91 aa)). Asn-43 carries an N-linked (GlcNAc...) asparagine glycan. Cys-44 and Cys-110 are oxidised to a cystine.

In terms of assembly, alpha-beta TR is a heterodimer composed of an alpha and beta chain; disulfide-linked. The alpha-beta TR is associated with the transmembrane signaling CD3 coreceptor proteins to form the TR-CD3 (TcR or TCR). The assembly of alpha-beta TR heterodimers with CD3 occurs in the endoplasmic reticulum where a single alpha-beta TR heterodimer associates with one CD3D-CD3E heterodimer, one CD3G-CD3E heterodimer and one CD247 homodimer forming a stable octameric structure. CD3D-CD3E and CD3G-CD3E heterodimers preferentially associate with TR alpha and TR beta chains, respectively. The association of the CD247 homodimer is the last step of TcR assembly in the endoplasmic reticulum and is required for transport to the cell surface.

It is found in the cell membrane. Functionally, v region of the variable domain of T cell receptor (TR) alpha chain that participates in the antigen recognition. Alpha-beta T cell receptors are antigen specific receptors which are essential to the immune response and are present on the cell surface of T lymphocytes. Recognize peptide-major histocompatibility (MH) (pMH) complexes that are displayed by antigen presenting cells (APC), a prerequisite for efficient T cell adaptive immunity against pathogens. Binding of alpha-beta TR to pMH complex initiates TR-CD3 clustering on the cell surface and intracellular activation of LCK that phosphorylates the ITAM motifs of CD3G, CD3D, CD3E and CD247 enabling the recruitment of ZAP70. In turn ZAP70 phosphorylates LAT, which recruits numerous signaling molecules to form the LAT signalosome. The LAT signalosome propagates signal branching to three major signaling pathways, the calcium, the mitogen-activated protein kinase (MAPK) kinase and the nuclear factor NF-kappa-B (NF-kB) pathways, leading to the mobilization of transcription factors that are critical for gene expression and essential for T cell growth and differentiation. The T cell repertoire is generated in the thymus, by V-(D)-J rearrangement. This repertoire is then shaped by intrathymic selection events to generate a peripheral T cell pool of self-MH restricted, non-autoaggressive T cells. Post-thymic interaction of alpha-beta TR with the pMH complexes shapes TR structural and functional avidity. The protein is T cell receptor alpha variable 12-2 of Homo sapiens (Human).